Consider the following 594-residue polypeptide: Aspartate--tRNA(Asp/Asn) ligase (594 aa).

Position 176 (Glu-176) interacts with L-aspartate. Positions 200–203 (QIFK) are aspartate. L-aspartate is bound at residue Arg-222. ATP is bound by residues 222–224 (RDE) and Gln-231. His-450 provides a ligand contact to L-aspartate. Residue Glu-484 participates in ATP binding. Residue Arg-491 participates in L-aspartate binding. 536-539 (GLDR) provides a ligand contact to ATP.

Belongs to the class-II aminoacyl-tRNA synthetase family. Type 1 subfamily. In terms of assembly, homodimer.

It is found in the cytoplasm. It carries out the reaction tRNA(Asx) + L-aspartate + ATP = L-aspartyl-tRNA(Asx) + AMP + diphosphate. Functionally, aspartyl-tRNA synthetase with relaxed tRNA specificity since it is able to aspartylate not only its cognate tRNA(Asp) but also tRNA(Asn). Reaction proceeds in two steps: L-aspartate is first activated by ATP to form Asp-AMP and then transferred to the acceptor end of tRNA(Asp/Asn). This chain is Aspartate--tRNA(Asp/Asn) ligase, found in Geobacillus sp. (strain WCH70).